We begin with the raw amino-acid sequence, 446 residues long: Corrinoid/iron-sulfur protein large subunit (446 aa).

The 4Fe-4S domain occupies 2-59 (PLTGLEIYKQLPKKNCGECGTPTCLAFAMNLASGKASLDSCPYVSDAAREALDAAAAP). [4Fe-4S] cluster-binding residues include cysteine 17, cysteine 20, cysteine 25, and cysteine 42. 5-methoxybenzimidazolylcob(I)amide-binding positions include threonine 340, threonine 346, 370-373 (GLSV), and alanine 433.

Heterohexamer composed of 2 subunits of AcsC, 2 subunits of AcsD and 2 subunits of AcsE. [4Fe-4S] cluster is required as a cofactor.

Functionally, acts as a methyl group carrier in the anaerobic acetyl-CoA pathway (Wood-Ljungdahl pathway) of carbon monoxide and carbon dioxide fixation. Binds the corrinoid 5-methoxybenzimidazolylcobamide which is then methylated by the AcsE subunit. This chain is Corrinoid/iron-sulfur protein large subunit (acsC), found in Moorella thermoacetica (Clostridium thermoaceticum).